The sequence spans 105 residues: Met repressor (105 aa).

It belongs to the MetJ family. In terms of assembly, homodimer.

Its subcellular location is the cytoplasm. Functionally, this regulatory protein, when combined with SAM (S-adenosylmethionine) represses the expression of the methionine regulon and of enzymes involved in SAM synthesis. The polypeptide is Met repressor (Hamiltonella defensa subsp. Acyrthosiphon pisum (strain 5AT)).